The primary structure comprises 175 residues: Protein TWIN SISTER of FT (175 aa).

The protein belongs to the phosphatidylethanolamine-binding protein family.

It localises to the cytoplasm. Functionally, may form complexes with phosphorylated ligands by interfering with kinases and their effectors. This is Protein TWIN SISTER of FT (TSF) from Arabidopsis thaliana (Mouse-ear cress).